The sequence spans 315 residues: MEIVSTGNETITEFVLLGFYDIPELHFLFFIVFTAVYVFIIIGNMLIIVAVVSSQRLHKPMYIFLANLSFLDILYTSAVMPKMLEGFLQEATISVAGCLLQFFIFGSLATAECLLLAVMAYDRYLAICYPLHYPLLMGPRRYMGLVVTTWLSGFVVDGLVVALVAQLRFCGPNHIDQFYCDFMLFVGLACSDPRVAQVTTLILSVFCLTIPFGLILTSYARIVVAVLRVPAGASRRRAFSTCSSHLAVVTTFYGTLMIFYVAPSAVHSQLLSKVFSLLYTVVTPLFNPVIYTMRNKEVHQALRKILCIKQTETLD.

The Extracellular portion of the chain corresponds to 1–27 (MEIVSTGNETITEFVLLGFYDIPELHF). Asn-8 carries an N-linked (GlcNAc...) asparagine glycan. Residues 28-48 (LFFIVFTAVYVFIIIGNMLII) form a helical membrane-spanning segment. The Cytoplasmic portion of the chain corresponds to 49 to 56 (VAVVSSQR). Residues 57-77 (LHKPMYIFLANLSFLDILYTS) traverse the membrane as a helical segment. Residues 78 to 100 (AVMPKMLEGFLQEATISVAGCLL) are Extracellular-facing. Cys-98 and Cys-190 are joined by a disulfide. A helical transmembrane segment spans residues 101–121 (QFFIFGSLATAECLLLAVMAY). The Cytoplasmic segment spans residues 122 to 140 (DRYLAICYPLHYPLLMGPR). A helical transmembrane segment spans residues 141-161 (RYMGLVVTTWLSGFVVDGLVV). The Extracellular portion of the chain corresponds to 162–198 (ALVAQLRFCGPNHIDQFYCDFMLFVGLACSDPRVAQV). A helical membrane pass occupies residues 199 to 218 (TTLILSVFCLTIPFGLILTS). At 219–238 (YARIVVAVLRVPAGASRRRA) the chain is on the cytoplasmic side. Residues 239-259 (FSTCSSHLAVVTTFYGTLMIF) form a helical membrane-spanning segment. Over 260-272 (YVAPSAVHSQLLS) the chain is Extracellular. The helical transmembrane segment at 273 to 293 (KVFSLLYTVVTPLFNPVIYTM) threads the bilayer. Residues 294 to 315 (RNKEVHQALRKILCIKQTETLD) lie on the Cytoplasmic side of the membrane.

It belongs to the G-protein coupled receptor 1 family.

The protein resides in the cell membrane. Its function is as follows. Odorant receptor. This is Olfactory receptor 11A1 (OR11A1) from Homo sapiens (Human).